Here is a 405-residue protein sequence, read N- to C-terminus: Phosphopentomutase (405 aa).

Mn(2+)-binding residues include Asp-10, Asp-303, His-308, Asp-344, His-345, and His-356.

It belongs to the phosphopentomutase family. It depends on Mn(2+) as a cofactor.

The protein localises to the cytoplasm. The enzyme catalyses 2-deoxy-alpha-D-ribose 1-phosphate = 2-deoxy-D-ribose 5-phosphate. It catalyses the reaction alpha-D-ribose 1-phosphate = D-ribose 5-phosphate. It functions in the pathway carbohydrate degradation; 2-deoxy-D-ribose 1-phosphate degradation; D-glyceraldehyde 3-phosphate and acetaldehyde from 2-deoxy-alpha-D-ribose 1-phosphate: step 1/2. In terms of biological role, isomerase that catalyzes the conversion of deoxy-ribose 1-phosphate (dRib-1-P) and ribose 1-phosphate (Rib-1-P) to deoxy-ribose 5-phosphate (dRib-5-P) and ribose 5-phosphate (Rib-5-P), respectively. In Shewanella frigidimarina (strain NCIMB 400), this protein is Phosphopentomutase.